Reading from the N-terminus, the 184-residue chain is Tumor necrosis factor receptor superfamily member 13C (184 aa).

Residues 1–78 are Extracellular-facing; sequence MRRGPRSLRG…EAALPLPGLL (78 aa). One copy of the TNFR-Cys; truncated repeat lies at 18-35; the sequence is PCVPAECFDLLVRHCVAC. 2 cysteine pairs are disulfide-bonded: Cys-19–Cys-32 and Cys-24–Cys-35. The interval 26 to 31 is essential for TNFSF13B/TALL1/BAFF/BLyS binding; it reads DLLVRH. The tract at residues 43–62 is disordered; sequence PKPAGASSPAPRTALQPQES. Residues 79–99 traverse the membrane as a helical; Signal-anchor for type III membrane protein segment; the sequence is FGAPALLGLALVLALVLVGLV. Over 100–184 the chain is Cytoplasmic; the sequence is SWRRRQRRLR…TTKTAGPEQQ (85 aa). Residues 107-184 form a disordered region; it reads RLRGASSAEA…TTKTAGPEQQ (78 aa). Positions 118 to 128 are enriched in basic and acidic residues; sequence DGDKDAPEPLD. Residues 168–184 show a composition bias toward polar residues; sequence LGSTELVTTKTAGPEQQ.

As to expression, highly expressed in spleen and lymph node, and in resting B-cells. Detected at lower levels in activated B-cells, resting CD4+ T-cells, in thymus and peripheral blood leukocytes.

The protein resides in the membrane. B-cell receptor specific for TNFSF13B/TALL1/BAFF/BLyS. Promotes the survival of mature B-cells and the B-cell response. The polypeptide is Tumor necrosis factor receptor superfamily member 13C (TNFRSF13C) (Homo sapiens (Human)).